A 330-amino-acid polypeptide reads, in one-letter code: Protein IN CHLOROPLAST ATPASE BIOGENESIS, chloroplastic (330 aa).

Residues 1–35 (MGSISMHITPSTALPIRHFRARVSCCSSGHVSFIK) constitute a chloroplast transit peptide.

Interacts with ATPC1.

The protein resides in the plastid. The protein localises to the chloroplast stroma. Functionally, involved in the assembly of the F(1) ATP synthase in chloroplast thylakoid membranes. Functions downstream of the CPN60 chaperones to promote assembly of the catalytically active core of the chloroplast ATP synthase. Assists the assembly of the ATP synthase gamma subunit into the active F(1) core downstream of CPN60-mediated folding, which is critical for the biogenesis of the chloroplast ATP synthase. The sequence is that of Protein IN CHLOROPLAST ATPASE BIOGENESIS, chloroplastic from Arabidopsis thaliana (Mouse-ear cress).